Reading from the N-terminus, the 151-residue chain is Group 10 secretory phospholipase A2 (151 aa).

The signal sequence occupies residues 1–17; the sequence is MLLLLLLLLLGPGPGFS. Positions 18–28 are excised as a propeptide; sequence EATRRSHVYKR. 8 disulfide bridges follow: cysteine 39/cysteine 97, cysteine 53/cysteine 143, cysteine 55/cysteine 71, cysteine 70/cysteine 125, cysteine 76/cysteine 150, cysteine 77/cysteine 118, cysteine 86/cysteine 111, and cysteine 104/cysteine 116. Residues tyrosine 54, glycine 56, and glycine 58 each contribute to the Ca(2+) site. Histidine 74 is an active-site residue. A Ca(2+)-binding site is contributed by aspartate 75. Aspartate 119 is a catalytic residue.

Belongs to the phospholipase A2 family. As to quaternary structure, interacts with PLA2R1; this interaction mediates PLA2G10 clearance and inactivation. Ca(2+) serves as cofactor. Expressed at high levels in testis and the gastrointestinal tract including stomach and colon. Expressed at lower levels in other tissues including small intestine, uterus, oviduct, lung, thymus, spleen and brain. Expressed in Paneth-like secretory epithelial cells of the colon. Expressed in gastric and ileac epithelial cells and in glandular epithelium of intestinal mucosa (at protein level). Expressed in late spermatogenic cells, spermatocytes and spermatids, but not spermatogonia in seminiferous tubules (at protein level). Expressed mainly in the apical side of endometrial epithelial cells and in the interstitium beneath the epithelium of uterus (at protein level). Expressed in resident spleen macrophages (at protein level). Expressed at outermost layer of hair follicles. Expressed in dorsal root ganglia in both NEFH-positive A-fibers and PRPH-positive C-fibers (at protein level).

It is found in the secreted. The protein localises to the lysosome. The protein resides in the cytoplasmic vesicle. Its subcellular location is the secretory vesicle. It localises to the acrosome. The catalysed reaction is a 1,2-diacyl-sn-glycero-3-phosphocholine + H2O = a 1-acyl-sn-glycero-3-phosphocholine + a fatty acid + H(+). It carries out the reaction 1-hexadecanoyl-2-(9Z-octadecenoyl)-sn-glycero-3-phosphocholine + H2O = 1-hexadecanoyl-sn-glycero-3-phosphocholine + (9Z)-octadecenoate + H(+). It catalyses the reaction 1-octadecanoyl-2-(5Z,8Z,11Z,14Z-eicosatetraenoyl)-sn-glycero-3-phosphocholine + H2O = 1-octadecanoyl-sn-glycero-3-phosphocholine + (5Z,8Z,11Z,14Z)-eicosatetraenoate + H(+). The enzyme catalyses 1,2-dihexadecanoyl-sn-glycero-3-phosphocholine + H2O = 1-hexadecanoyl-sn-glycero-3-phosphocholine + hexadecanoate + H(+). The catalysed reaction is 1-hexadecanoyl-2-(9Z-octadecenoyl)-sn-glycero-3-phosphoglycerol + H2O = 1-hexadecanoyl-sn-glycero-3-phosphoglycerol + (9Z)-octadecenoate + H(+). It carries out the reaction 1,2-dihexadecanoyl-sn-glycero-3-phospho-(1'-sn-glycerol) + H2O = 1-hexadecanoyl-sn-glycero-3-phospho-(1'-sn-glycerol) + hexadecanoate + H(+). It catalyses the reaction 1-hexadecanoyl-2-(9Z-octadecenoyl)-sn-glycero-3-phospho-L-serine + H2O = 1-hexadecanoyl-sn-glycero-3-phospho-L-serine + (9Z)-octadecenoate + H(+). The enzyme catalyses 1-hexadecanoyl-2-(9Z,12Z-octadecadienoyl)-sn-glycero-3-phosphoethanolamine + H2O = 1-hexadecanoyl-sn-glycero-3-phosphoethanolamine + (9Z,12Z)-octadecadienoate + H(+). The catalysed reaction is 1-hexadecanoyl-2-(9Z-octadecenoyl)-sn-glycero-3-phosphate + H2O = 1-hexadecanoyl-sn-glycero-3-phosphate + (9Z)-octadecenoate + H(+). It carries out the reaction 1-O-hexadecyl-2-acetyl-sn-glycero-3-phosphocholine + H2O = 1-O-hexadecyl-sn-glycero-3-phosphocholine + acetate + H(+). Its function is as follows. Secretory calcium-dependent phospholipase A2 that primarily targets extracellular phospholipids. Hydrolyzes the ester bond of the fatty acyl group attached at sn-2 position of phospholipids with preference for phosphatidylcholines and phosphatidylglycerols over phosphatidylethanolamines. Preferentially releases sn-2 omega-6 and omega-3 polyunsaturated fatty acyl (PUFA) chains over saturated fatty acyls. Contributes to phospholipid remodeling of very low-density lipoprotein (VLDL), low-density lipoprotein (LDL) and high-density lipoprotein (HDL) particles. Hydrolyzes LDL phospholipids releasing unsaturated fatty acids that regulate macrophage differentiation toward foam cells. Efficiently hydrolyzes and inactivates PAF, a potent lipid mediator present in oxidized LDL. May act in an autocrine and paracrine manner. Secreted by lung epithelium, targets membrane phospholipids of infiltrating eosinophils, releasing arachidonate and boosting eicosanoid and cysteinyl leukotriene synthesis involved in airway inflammatory response. Secreted by gut epithelium, hydrolyzes dietary and biliary phosphatidylcholines in the gastrointestinal lumen, thereby regulating adipogenesis and body weight. Plays a stem cell regulator role in colon epithelium. Within intracellular compartment, mediates Paneth-like cell differentiation and its stem cell supporting functions by inhibiting Wnt signaling pathway in intestinal stem cell (ISC). Secreted in the intestinal lumen upon inflammation, acts in an autocrine way and promotes prostaglandin E2 synthesis that stimulates the Wnt signaling pathway in ISCs and tissue regeneration. May participate in hair follicle morphogenesis by regulating phosphatidylethanolamines metabolism at the outermost epithelial layer and facilitating melanin synthesis. By generating lysophosphatidylcholines (LPCs) at sperm acrosome controls sperm cell capacitation, acrosome reaction and overall fertility. May promote neurite outgrowth in neuron fibers involved in nociception. Contributes to lipid remodeling of cellular membranes and generation of lipid mediators involved in pathogen clearance. Cleaves sn-2 fatty acyl chains of phosphatidylglycerols and phosphatidylethanolamines, which are major components of membrane phospholipids in bacteria. Displays bactericidal activity against Gram-positive bacteria by directly hydrolyzing phospholipids of the bacterial membrane. In pulmonary epithelium, may contribute to host defense response against adenoviral infection. Prevents adenovirus entry into host cells by hydrolyzing host cell plasma membrane, releasing C16:0 LPCs that inhibit virus-mediated membrane fusion and viral infection. Likely prevents adenoviral entry into the endosomes of host cells. May play a role in maturation and activation of innate immune cells including macrophages, group 2 innate lymphoid cells and mast cells. In Mus musculus (Mouse), this protein is Group 10 secretory phospholipase A2 (Pla2g10).